Reading from the N-terminus, the 104-residue chain is MAAKIRREDEVIVLAGKDKGKRAKVSQVLPTGKLILEGINLVKKHQKPNPQLGVAGGIVEKEAPIQASNVAIFNSATGKADRVGFRFEDGKKVRFFKSNSELVK.

Belongs to the universal ribosomal protein uL24 family. Part of the 50S ribosomal subunit.

Its function is as follows. One of two assembly initiator proteins, it binds directly to the 5'-end of the 23S rRNA, where it nucleates assembly of the 50S subunit. Functionally, one of the proteins that surrounds the polypeptide exit tunnel on the outside of the subunit. This Shewanella sp. (strain W3-18-1) protein is Large ribosomal subunit protein uL24.